Here is a 196-residue protein sequence, read N- to C-terminus: Leucyl/phenylalanyl-tRNA--protein transferase (196 aa).

It belongs to the L/F-transferase family.

It localises to the cytoplasm. It carries out the reaction N-terminal L-lysyl-[protein] + L-leucyl-tRNA(Leu) = N-terminal L-leucyl-L-lysyl-[protein] + tRNA(Leu) + H(+). The catalysed reaction is N-terminal L-arginyl-[protein] + L-leucyl-tRNA(Leu) = N-terminal L-leucyl-L-arginyl-[protein] + tRNA(Leu) + H(+). It catalyses the reaction L-phenylalanyl-tRNA(Phe) + an N-terminal L-alpha-aminoacyl-[protein] = an N-terminal L-phenylalanyl-L-alpha-aminoacyl-[protein] + tRNA(Phe). In terms of biological role, functions in the N-end rule pathway of protein degradation where it conjugates Leu, Phe and, less efficiently, Met from aminoacyl-tRNAs to the N-termini of proteins containing an N-terminal arginine or lysine. This Thermosynechococcus vestitus (strain NIES-2133 / IAM M-273 / BP-1) protein is Leucyl/phenylalanyl-tRNA--protein transferase.